Consider the following 269-residue polypeptide: Shikimate dehydrogenase (NADP(+)) (269 aa).

Shikimate contacts are provided by residues 19-21 and Thr66; that span reads SLS. Lys70 serves as the catalytic Proton acceptor. Residue Asp82 coordinates NADP(+). Residues Asn91 and Asp106 each contribute to the shikimate site. Residues 130 to 134, 153 to 158, and Ile214 contribute to the NADP(+) site; these read GAGGA and NRTKEK. Position 216 (Tyr216) interacts with shikimate. Gly235 contacts NADP(+). Gln242 is a shikimate binding site.

Belongs to the shikimate dehydrogenase family. Homodimer.

The enzyme catalyses shikimate + NADP(+) = 3-dehydroshikimate + NADPH + H(+). Its pathway is metabolic intermediate biosynthesis; chorismate biosynthesis; chorismate from D-erythrose 4-phosphate and phosphoenolpyruvate: step 4/7. Involved in the biosynthesis of the chorismate, which leads to the biosynthesis of aromatic amino acids. Catalyzes the reversible NADPH linked reduction of 3-dehydroshikimate (DHSA) to yield shikimate (SA). In Aquifex aeolicus (strain VF5), this protein is Shikimate dehydrogenase (NADP(+)).